We begin with the raw amino-acid sequence, 1387 residues long: Mediator of RNA polymerase II transcription subunit 13 (1387 aa).

Disordered regions lie at residues 81–102 (ELNNESESPQPERKGHFTPEFS), 354–400 (HSAN…ESYS), and 620–676 (SVNS…DIPM). 2 stretches are compositionally biased toward polar residues: residues 354–367 (HSANNSNNVSSTGE) and 390–400 (SRQNFPTESYS).

It belongs to the Mediator complex subunit 13 family. Component of the SRB8-11 complex, which itself associates with the Mediator complex.

The protein resides in the nucleus. Component of the SRB8-11 complex. The SRB8-11 complex is a regulatory module of the Mediator complex which is itself involved in regulation of basal and activated RNA polymerase II-dependent transcription. The SRB8-11 complex may be involved in the transcriptional repression of a subset of genes regulated by Mediator. It may inhibit the association of the Mediator complex with RNA polymerase II to form the holoenzyme complex. This Kluyveromyces lactis (strain ATCC 8585 / CBS 2359 / DSM 70799 / NBRC 1267 / NRRL Y-1140 / WM37) (Yeast) protein is Mediator of RNA polymerase II transcription subunit 13 (SSN2).